A 704-amino-acid chain; its full sequence is Urea-proton symporter DUR3 (704 aa).

Transmembrane regions (helical) follow at residues 39-59, 80-100, 115-135, 159-179, 192-212, 216-236, 291-311, 336-356, 388-408, 435-455, 461-481, 486-506, 527-547, 590-610, and 622-642; these read YAVILGFGAFFAVFTSFLVWL, VKTGLIASVIVSQWTWAATIL, FWYASGATIQVLLFGVMAIEI, IVFLVFCLATNVVVTAMLLLG, LYAASFLIPLGVVVYTLAGGL, FLASYVHSVIVHVALVVFVFL, SSGGAVFGLINIVGNFGTVFV, LVWFAVPFSLATSLGLGALAL, LTMLFMAVTSAGSSELIAVSS, AVLGFGCFMGILAVVLNKAGV, YLAMGVLIGSAVIPIAFMLLW, AFGAILGATSGCVFGIITWLT, LAGNLVAILTGGLIHAVCSLV, AWIVKWGLVFTILIVVIWPVL, and FWFWAIVAIAWGTIGSIVIIG.

Belongs to the sodium:solute symporter (SSF) (TC 2.A.21) family. As to expression, expressed in root rhizodermis, including root hairs and cortex in more basal root zones. Expressed in shoots.

It localises to the cell membrane. In terms of biological role, high-affinity urea-proton symporter involved in the active transport of urea across the plasma membrane into root cells. May play an important role in urea uptake by plant cells at low external urea concentrations. The protein is Urea-proton symporter DUR3 (DUR3) of Arabidopsis thaliana (Mouse-ear cress).